A 179-amino-acid polypeptide reads, in one-letter code: MYEYLDRRYALALYQVAEKKGKVDEYLQDLREICELIENNHEFYEVIKHPQISTKKKKKTFISIFKDKIDEELLSFLLILIEKDRILYLREKLNEMEKIDLERKNTLKGIIKTAIPLLSNEFDNLRDIFQKKYDKNILFETEVDRNLLGGVYVRVGHDVIDDTVKSKIEEMKDLMLKQK.

It belongs to the ATPase delta chain family. As to quaternary structure, F-type ATPases have 2 components, F(1) - the catalytic core - and F(0) - the membrane proton channel. F(1) has five subunits: alpha(3), beta(3), gamma(1), delta(1), epsilon(1). F(0) has three main subunits: a(1), b(2) and c(10-14). The alpha and beta chains form an alternating ring which encloses part of the gamma chain. F(1) is attached to F(0) by a central stalk formed by the gamma and epsilon chains, while a peripheral stalk is formed by the delta and b chains.

It localises to the cell membrane. F(1)F(0) ATP synthase produces ATP from ADP in the presence of a proton or sodium gradient. F-type ATPases consist of two structural domains, F(1) containing the extramembraneous catalytic core and F(0) containing the membrane proton channel, linked together by a central stalk and a peripheral stalk. During catalysis, ATP synthesis in the catalytic domain of F(1) is coupled via a rotary mechanism of the central stalk subunits to proton translocation. Its function is as follows. This protein is part of the stalk that links CF(0) to CF(1). It either transmits conformational changes from CF(0) to CF(1) or is implicated in proton conduction. This is ATP synthase subunit delta from Clostridium botulinum (strain Alaska E43 / Type E3).